The sequence spans 364 residues: Lipoyl synthase, mitochondrial (364 aa).

Residues 34 to 53 (PNFQDFIQNSDNSKDDFENY) form a disordered region. Residues cysteine 99, cysteine 104, cysteine 110, cysteine 130, cysteine 134, cysteine 137, and serine 345 each contribute to the [4Fe-4S] cluster site. Positions 115–334 (EHGTQTATIM…EQRGNELGFL (220 aa)) constitute a Radical SAM core domain.

The protein belongs to the radical SAM superfamily. Lipoyl synthase family. [4Fe-4S] cluster serves as cofactor.

It localises to the mitochondrion. It carries out the reaction [[Fe-S] cluster scaffold protein carrying a second [4Fe-4S](2+) cluster] + N(6)-octanoyl-L-lysyl-[protein] + 2 oxidized [2Fe-2S]-[ferredoxin] + 2 S-adenosyl-L-methionine + 4 H(+) = [[Fe-S] cluster scaffold protein] + N(6)-[(R)-dihydrolipoyl]-L-lysyl-[protein] + 4 Fe(3+) + 2 hydrogen sulfide + 2 5'-deoxyadenosine + 2 L-methionine + 2 reduced [2Fe-2S]-[ferredoxin]. The protein operates within protein modification; protein lipoylation via endogenous pathway; protein N(6)-(lipoyl)lysine from octanoyl-[acyl-carrier-protein]: step 2/2. In terms of biological role, catalyzes the radical-mediated insertion of two sulfur atoms into the C-6 and C-8 positions of the octanoyl moiety bound to the lipoyl domains of lipoate-dependent enzymes, thereby converting the octanoylated domains into lipoylated derivatives. The polypeptide is Lipoyl synthase, mitochondrial (Drosophila grimshawi (Hawaiian fruit fly)).